Reading from the N-terminus, the 182-residue chain is Isopentenyl-diphosphate Delta-isomerase (182 aa).

Histidine 25 and histidine 32 together coordinate Mn(2+). Positions 30 to 164 (RLHLAFSSWL…PWAFSPWMVM (135 aa)) constitute a Nudix hydrolase domain. Residue cysteine 67 is part of the active site. Cysteine 67 is a Mg(2+) binding site. Histidine 69 lines the Mn(2+) pocket. Mg(2+) is bound at residue glutamate 87. Glutamate 114 and glutamate 116 together coordinate Mn(2+). Residue glutamate 116 is part of the active site.

It belongs to the IPP isomerase type 1 family. Homodimer. The cofactor is Mg(2+). It depends on Mn(2+) as a cofactor.

The protein resides in the cytoplasm. It carries out the reaction isopentenyl diphosphate = dimethylallyl diphosphate. It functions in the pathway isoprenoid biosynthesis; dimethylallyl diphosphate biosynthesis; dimethylallyl diphosphate from isopentenyl diphosphate: step 1/1. Its function is as follows. Catalyzes the 1,3-allylic rearrangement of the homoallylic substrate isopentenyl (IPP) to its highly electrophilic allylic isomer, dimethylallyl diphosphate (DMAPP). The protein is Isopentenyl-diphosphate Delta-isomerase of Shigella dysenteriae serotype 1 (strain Sd197).